We begin with the raw amino-acid sequence, 507 residues long: ATP synthase subunit alpha (507 aa).

Residues 118 to 141 (VDGLGPIETTETRPIESPAPGVMD) are disordered. 172–179 (GDRQTGKT) provides a ligand contact to ATP.

This sequence belongs to the ATPase alpha/beta chains family. F-type ATPases have 2 components, CF(1) - the catalytic core - and CF(0) - the membrane proton channel. CF(1) has five subunits: alpha(3), beta(3), gamma(1), delta(1), epsilon(1). CF(0) has three main subunits: a(1), b(2) and c(9-12). The alpha and beta chains form an alternating ring which encloses part of the gamma chain. CF(1) is attached to CF(0) by a central stalk formed by the gamma and epsilon chains, while a peripheral stalk is formed by the delta and b chains.

The protein resides in the cell membrane. It catalyses the reaction ATP + H2O + 4 H(+)(in) = ADP + phosphate + 5 H(+)(out). Functionally, produces ATP from ADP in the presence of a proton gradient across the membrane. The alpha chain is a regulatory subunit. This chain is ATP synthase subunit alpha, found in Anoxybacillus flavithermus (strain DSM 21510 / WK1).